Here is a 431-residue protein sequence, read N- to C-terminus: Glucose-6-phosphate isomerase (431 aa).

The active-site Proton donor is Glu284. Residues His305 and Lys420 contribute to the active site.

Belongs to the GPI family.

Its subcellular location is the cytoplasm. It carries out the reaction alpha-D-glucose 6-phosphate = beta-D-fructose 6-phosphate. It functions in the pathway carbohydrate biosynthesis; gluconeogenesis. Its pathway is carbohydrate degradation; glycolysis; D-glyceraldehyde 3-phosphate and glycerone phosphate from D-glucose: step 2/4. Functionally, catalyzes the reversible isomerization of glucose-6-phosphate to fructose-6-phosphate. This Mycoplasma genitalium (strain ATCC 33530 / DSM 19775 / NCTC 10195 / G37) (Mycoplasmoides genitalium) protein is Glucose-6-phosphate isomerase.